Reading from the N-terminus, the 226-residue chain is N-acetyltransferase family 8 member 2 (226 aa).

2 helical membrane-spanning segments follow: residues 33–55 (FYHV…TIIL) and 60–82 (WLLA…WVSC). The region spanning 69–221 (LFLLCLRLIF…FHFTYSLPSV (153 aa)) is the N-acetyltransferase domain. Position 204 is an N6-acetyllysine (lysine 204).

Belongs to the camello family.

It is found in the membrane. In terms of biological role, probable acetyltransferase. Has no detectable histone acetyltransferase activity towards histone H3 or H4. The chain is N-acetyltransferase family 8 member 2 from Rattus norvegicus (Rat).